The chain runs to 557 residues: Putative sensory transducer protein (557 aa).

Residues 122-145 traverse the membrane as a helical segment; sequence TASTVMIVVIFVGILIAIALGVFI. The region spanning 147 to 199 is the HAMP domain; the sequence is RIISKPIGQMVEAADRLALGDVEVDVKAETRDEIGKLAESFKRMIENIREQAY. The region spanning 243–472 is the Methyl-accepting transducer domain; sequence VAAQVAAGAK…ESAAASEELS (230 aa). Q268 is modified (glutamate methyl ester (Gln)). A Glutamate methyl ester (Glu) modification is found at E274. Q281 is subject to Glutamate methyl ester (Gln). A Glutamate methyl ester (Glu) modification is found at E463. Basic and acidic residues predominate over residues 511–541; sequence DYTENKQPKSYSKEENGEYSDGKETAEKDVG. The segment at 511-542 is disordered; it reads DYTENKQPKSYSKEENGEYSDGKETAEKDVGG.

This sequence belongs to the methyl-accepting chemotaxis (MCP) protein family.

It is found in the cell membrane. May bind attractants or detect changes in the extracellular concentration of soluble sugars. The chain is Putative sensory transducer protein from Acetivibrio thermocellus (strain ATCC 27405 / DSM 1237 / JCM 9322 / NBRC 103400 / NCIMB 10682 / NRRL B-4536 / VPI 7372) (Clostridium thermocellum).